Consider the following 215-residue polypeptide: Ras-related protein Rab-5A (215 aa).

Positions 29, 30, 32, 33, 34, 35, 46, 47, 52, and 78 each coordinate GTP. Ser-34 is a Mg(2+) binding site. 2 short sequence motifs (switch) span residues 44–56 (QFHE…IGAA) and 77–93 (AGQE…YRGA). Thr-52 provides a ligand contact to Mg(2+). Residue Ser-84 is modified to Phosphoserine. Residues Asn-133, Lys-134, Asp-136, Ala-164, and Lys-165 each contribute to the GTP site. Residues 181–215 (LPKNEPQNPGANSARGRGVDLTEPAQPARSQCCSN) are disordered. Residues Cys-212 and Cys-213 are each lipidated (S-geranylgeranyl cysteine).

It belongs to the small GTPase superfamily. Rab family. In terms of assembly, interacts with GDI1; this promotes dissociation from membranes; phosphorylation at Ser-84 disrupts this interaction. Interacts with GDI2; phosphorylation at Ser-84 disrupts the interaction. Interacts with EEA1. Interacts with RIN1 and GAPVD1, which regulate its pathway, probably by acting as a GEF. Interacts with ALS2CL, SUN2, ZFYVE20 and RUFY1. Interacts with RABEP1; one RABEP1 homodimer binds two RAB5A chains, but at opposite sides of the dimer. Interacts with SGSM1, SGSM3 and PIK3CB. Interacts with RINL. May be a component of a complex composed of RAB5A, DYN2 and PIK3C3. Does not interact with the BLOC-3 complex (heterodimer of HPS1 and HPS4). Interacts with CLN5. Interacts with APPL2. Interacts with F8A1/F8A2/F8A3. Found in a complex with F8A1/F8A2/F8A3, HTT and RAB5A; mediates the recruitment of HTT by RAB5A onto early endosomes. Interacts with ATP9A. Interacts with PPP1R21; mediates the recruitment of FERRY complex by RAB5A onto early endosomes. Mg(2+) serves as cofactor. In terms of processing, phosphorylation of Ser-84 in the switch II region by LRRK2 prevents the association of RAB regulatory proteins, including RAB GDP dissociation inhibitors GDI1 and GDI2.

Its subcellular location is the cell membrane. The protein localises to the early endosome membrane. It is found in the melanosome. It localises to the cytoplasmic vesicle. The protein resides in the cell projection. Its subcellular location is the ruffle. The protein localises to the membrane. It is found in the cytoplasm. It localises to the cytosol. The protein resides in the phagosome membrane. Its subcellular location is the endosome membrane. It carries out the reaction GTP + H2O = GDP + phosphate + H(+). With respect to regulation, regulated by guanine nucleotide exchange factors (GEFs) including RINL, which promote the exchange of bound GDP for free GTP. Regulated by GTPase activating proteins (GAPs) which increase the GTP hydrolysis activity. Inhibited by GDP dissociation inhibitors (GDIs). In terms of biological role, the small GTPases Rab are key regulators of intracellular membrane trafficking, from the formation of transport vesicles to their fusion with membranes. Rabs cycle between an inactive GDP-bound form and an active GTP-bound form that is able to recruit to membranes different sets of downstream effectors directly responsible for vesicle formation, movement, tethering and fusion. RAB5A is required for the fusion of plasma membranes and early endosomes. Contributes to the regulation of filopodia extension. Required for the exosomal release of SDCBP, CD63, PDCD6IP and syndecan. Regulates maturation of apoptotic cell-containing phagosomes, probably downstream of DYN2 and PIK3C3. In Rattus norvegicus (Rat), this protein is Ras-related protein Rab-5A.